A 353-amino-acid chain; its full sequence is C-X-C chemokine receptor type 2 (353 aa).

The Extracellular portion of the chain corresponds to 1 to 45 (FNMESDSFEDFWKGEDLSNYSYSSALPPFLLDASPCEPESLEINK). N-linked (GlcNAc...) asparagine glycosylation is present at N19. The helical transmembrane segment at 46 to 72 (YFVVIIYALVFLLSLLGNSLVILVILY) threads the bilayer. The Cytoplasmic segment spans residues 73 to 81 (SRVGRSVTD). A helical membrane pass occupies residues 82–102 (VYLLNLALADLLFALTLPIWA). At 103-117 (ASKVNGWIFGTFLCK) the chain is on the extracellular side. A disulfide bridge connects residues C116 and C193. Residues 118-139 (VVSLLKEVNFYSGILLLACISV) form a helical membrane-spanning segment. The Cytoplasmic portion of the chain corresponds to 140-160 (DRYLAIVHATRTLTQKRYLVK). The chain crosses the membrane as a helical span at residues 161–180 (FICLSIWGLSLLLALPVLLF). The Extracellular segment spans residues 181-205 (RRTIYPSNVSPVCYEDMGNNTANWR). Residues 206–228 (MLLRILPQSFGFIVPLLIMLFCY) form a helical membrane-spanning segment. At 229–248 (GFTLRTLFKAHMGQKHRAMR) the chain is on the cytoplasmic side. A helical membrane pass occupies residues 249–270 (VIFAVVLIFLLCWLPYNLVLLA). The Extracellular portion of the chain corresponds to 271–291 (DTLMRTQVIQETCERRNHINQ). Residues 292–312 (ALDATEILGILHSCLNPLIYA) form a helical membrane-spanning segment. Over 313 to 353 (FIGQKFCHGLLKILAIHGLISKDSLPKDSRPSFVGSSSGHT) the chain is Cytoplasmic.

Belongs to the G-protein coupled receptor 1 family. As to quaternary structure, interacts with IL8. Interacts with GNAI2. Phosphorylated upon ligand binding; which is required for desensitization.

It is found in the cell membrane. Receptor for interleukin-8 which is a powerful neutrophil chemotactic factor. Binding of IL-8 to the receptor causes activation of neutrophils. This response is mediated via a G-protein that activates a phosphatidylinositol-calcium second messenger system. Binds to IL-8 with high affinity. Also binds with high affinity to CXCL3, GRO/MGSA and NAP-2. This Gorilla gorilla gorilla (Western lowland gorilla) protein is C-X-C chemokine receptor type 2 (CXCR2).